A 515-amino-acid chain; its full sequence is 2-isopropylmalate synthase (515 aa).

Residues 5–267 form the Pyruvate carboxyltransferase domain; it reads VIIFDTTLRD…HTGLDHKEIH (263 aa). Mn(2+) contacts are provided by Asp-14, His-202, His-204, and Asn-238. The regulatory domain stretch occupies residues 392-515; sequence KLNYLSVQSG…EMKQQKFATV (124 aa).

It belongs to the alpha-IPM synthase/homocitrate synthase family. LeuA type 1 subfamily. In terms of assembly, homodimer. It depends on Mn(2+) as a cofactor.

Its subcellular location is the cytoplasm. The catalysed reaction is 3-methyl-2-oxobutanoate + acetyl-CoA + H2O = (2S)-2-isopropylmalate + CoA + H(+). It functions in the pathway amino-acid biosynthesis; L-leucine biosynthesis; L-leucine from 3-methyl-2-oxobutanoate: step 1/4. Its function is as follows. Catalyzes the condensation of the acetyl group of acetyl-CoA with 3-methyl-2-oxobutanoate (2-ketoisovalerate) to form 3-carboxy-3-hydroxy-4-methylpentanoate (2-isopropylmalate). This chain is 2-isopropylmalate synthase, found in Vibrio atlanticus (strain LGP32) (Vibrio splendidus (strain Mel32)).